The sequence spans 390 residues: Substance-K receptor (390 aa).

The Extracellular segment spans residues 1-32 (MGTRAIVSDANILSGLESNATGVTAFSMPGWQ). N-linked (GlcNAc...) asparagine glycosylation is present at Asn19. Residues 33–56 (LALWATAYLALVLVAVTGNATVIW) form a helical membrane-spanning segment. Topologically, residues 57 to 69 (IILAHERMRTVTN) are cytoplasmic. Residues 70-90 (YFIINLALADLCMAAFNATFN) form a helical membrane-spanning segment. Topologically, residues 91 to 107 (FIYASHNIWYFGRAFCY) are extracellular. Cysteines 106 and 181 form a disulfide. The chain crosses the membrane as a helical span at residues 108-129 (FQNLFPITAMFVSIYSMTAIAA). Topologically, residues 130–149 (DRYMAIVHPFQPRLSAPSTK) are cytoplasmic. The helical transmembrane segment at 150–170 (AIIAGIWLVALALASPQCFYS) threads the bilayer. Residues 171–196 (TITVDEGATKCVVAWPNDNGGKMLLL) lie on the Extracellular side of the membrane. Residues 197 to 218 (YHLVVFVLIYFLPLLVMFGAYS) form a helical membrane-spanning segment. Residues 219–251 (VIGLTLWKRAVPRHQAHGANLRHLQAKKKFVKA) lie on the Cytoplasmic side of the membrane. A helical membrane pass occupies residues 252–272 (MVLVVLTFAICWLPYHLYFIL). The Extracellular portion of the chain corresponds to 273–290 (GTFQEDIYYHKFIQQVYL). A helical transmembrane segment spans residues 291 to 310 (ALFWLAMSSTMYNPIIYCCL). At 311-390 (NHRFRSGFRL…PAGPICKAQA (80 aa)) the chain is on the cytoplasmic side. The S-palmitoyl cysteine moiety is linked to residue Cys324. Positions 365–390 (HSEATNGQVGSPQDGEPAGPICKAQA) are disordered. A compositionally biased stretch (polar residues) spans 366–375 (SEATNGQVGS).

Belongs to the G-protein coupled receptor 1 family.

Its subcellular location is the cell membrane. In terms of biological role, this is a receptor for the tachykinin neuropeptide substance K (neurokinin A). It is associated with G proteins that activate a phosphatidylinositol-calcium second messenger system. The rank order of affinity of this receptor to tachykinins is: substance K &gt; neuromedin-K &gt; substance P. The polypeptide is Substance-K receptor (Tacr2) (Rattus norvegicus (Rat)).